The sequence spans 319 residues: Pantothenate kinase (319 aa).

97-104 (GSVAVGKS) contacts ATP.

It belongs to the prokaryotic pantothenate kinase family.

It localises to the cytoplasm. It catalyses the reaction (R)-pantothenate + ATP = (R)-4'-phosphopantothenate + ADP + H(+). The protein operates within cofactor biosynthesis; coenzyme A biosynthesis; CoA from (R)-pantothenate: step 1/5. This Chelativorans sp. (strain BNC1) protein is Pantothenate kinase.